The primary structure comprises 503 residues: Probable cytosol aminopeptidase (503 aa).

Residues lysine 270 and aspartate 275 each coordinate Mn(2+). Lysine 282 is an active-site residue. Residues aspartate 293, aspartate 352, and glutamate 354 each coordinate Mn(2+). Arginine 356 is a catalytic residue.

This sequence belongs to the peptidase M17 family. Mn(2+) is required as a cofactor.

Its subcellular location is the cytoplasm. It carries out the reaction Release of an N-terminal amino acid, Xaa-|-Yaa-, in which Xaa is preferably Leu, but may be other amino acids including Pro although not Arg or Lys, and Yaa may be Pro. Amino acid amides and methyl esters are also readily hydrolyzed, but rates on arylamides are exceedingly low.. The enzyme catalyses Release of an N-terminal amino acid, preferentially leucine, but not glutamic or aspartic acids.. Presumably involved in the processing and regular turnover of intracellular proteins. Catalyzes the removal of unsubstituted N-terminal amino acids from various peptides. The polypeptide is Probable cytosol aminopeptidase (Escherichia coli O139:H28 (strain E24377A / ETEC)).